A 451-amino-acid chain; its full sequence is Glutamyl-tRNA reductase (451 aa).

Substrate contacts are provided by residues 47–50, S132, 137–139, and Q143; these read TCNR and EPQ. C48 functions as the Nucleophile in the catalytic mechanism. 212 to 217 contacts NADP(+); it reads AAGEMN.

Belongs to the glutamyl-tRNA reductase family. In terms of assembly, homodimer.

The catalysed reaction is (S)-4-amino-5-oxopentanoate + tRNA(Glu) + NADP(+) = L-glutamyl-tRNA(Glu) + NADPH + H(+). Its pathway is porphyrin-containing compound metabolism; protoporphyrin-IX biosynthesis; 5-aminolevulinate from L-glutamyl-tRNA(Glu): step 1/2. Functionally, catalyzes the NADPH-dependent reduction of glutamyl-tRNA(Glu) to glutamate 1-semialdehyde (GSA). In Psychrobacter sp. (strain PRwf-1), this protein is Glutamyl-tRNA reductase.